Here is a 466-residue protein sequence, read N- to C-terminus: UDP-N-acetylglucosamine--dolichyl-phosphate N-acetylglucosaminephosphotransferase (466 aa).

A helical transmembrane segment spans residues 12–32 (AAFAVAAHAPVLGLILLGSIV). A UDP-N-acetyl-alpha-D-glucosamine-binding site is contributed by D57. N-linked (GlcNAc...) asparagine glycosylation occurs at N59. Residue E90 coordinates UDP-N-acetyl-alpha-D-glucosamine. Transmembrane regions (helical) follow at residues 91 to 111 (SLGI…TVCL) and 124 to 144 (PYAS…LGFV). Dolichyl phosphate is bound at residue K155. Helical transmembrane passes span 156 to 176 (IILT…SLSV) and 236 to 256 (GAAL…LCIF). 255 to 263 (IFCTNSINI) contacts dolichyl phosphate. N262 contributes to the Mg(2+) binding site. Helical transmembrane passes span 263 to 283 (ILAG…VASV), 316 to 336 (DHQL…LALW), 345 to 365 (VFVG…SSIT), and 374 to 394 (LFFA…FSIV). N268 is a UDP-N-acetyl-alpha-D-glucosamine binding site. A Mg(2+)-binding site is contributed by D349. Residue 398–400 (RHR) participates in UDP-N-acetyl-alpha-D-glucosamine binding. N416 carries an N-linked (GlcNAc...) asparagine glycan. Residues 442-462 (CQVIACVLGFVVRYVLSAFLY) traverse the membrane as a helical segment.

Belongs to the glycosyltransferase 4 family. Mg(2+) is required as a cofactor.

The protein resides in the endoplasmic reticulum membrane. It carries out the reaction a di-trans,poly-cis-dolichyl phosphate + UDP-N-acetyl-alpha-D-glucosamine = an N-acetyl-alpha-D-glucosaminyl-diphospho-di-trans,poly-cis-dolichol + UMP. It functions in the pathway protein modification; protein glycosylation. Inhibited by natural nucleoside antibiotic tunicamycin, which acts as a structural analog and competitor of UDP-GlcNAc. Functionally, UDP-N-acetylglucosamine--dolichyl-phosphate N-acetylglucosaminephosphotransferase that operates in the biosynthetic pathway of dolichol-linked oligosaccharides, the glycan precursors employed in protein asparagine (N)-glycosylation. The assembly of dolichol-linked oligosaccharides begins on the cytosolic side of the endoplasmic reticulum membrane and finishes in its lumen. The sequential addition of sugars to dolichol pyrophosphate produces dolichol-linked oligosaccharides containing fourteen sugars, including two GlcNAcs, nine mannoses and three glucoses. Once assembled, the oligosaccharide is transferred from the lipid to nascent proteins by oligosaccharyltransferases. Catalyzes the initial step of dolichol-linked oligosaccharide biosynthesis, transfering GlcNAc-1-P from cytosolic UDP-GlcNAc onto the carrier lipid dolichyl phosphate (P-dolichol), yielding GlcNAc-P-P-dolichol embedded in the cytoplasmic leaflet of the endoplasmic reticulum membrane. This is UDP-N-acetylglucosamine--dolichyl-phosphate N-acetylglucosaminephosphotransferase (NAGT) from Leishmania amazonensis.